Here is a 343-residue protein sequence, read N- to C-terminus: Zinc finger protein Gfi-1b (343 aa).

A mediates repression of transcription region spans residues 1–20; that stretch reads MPRSFLVKSKKTHTYNQHRY. The interval 1 to 20 is SNAG domain; sequence MPRSFLVKSKKTHTYNQHRY. Residues 51-77 form a disordered region; it reads STDPTEKQHTPENVITEEARSDPGDPR. Basic and acidic residues predominate over residues 67 to 77; it reads EEARSDPGDPR. C2H2-type zinc fingers lie at residues 176–199, 205–227, 233–255, 261–283, 289–311, and 317–340; these read YHCVKCSKVFSTSHGLEVHVRRSH, FVCNICGKSFGHAVSLEQHLNVH, FECKMCGKTFKRSSTLSTHLLIH, YPCQFCGKRFHQKSDMKKHTYIH, HKCQVCGKAFSQSSNLITHSRKH, and FSCDLCCKGFQRKVDLRRHRENQH.

The protein resides in the nucleus. Its function is as follows. Essential transcriptional regulator necessary for development and differentiation of erythroid and megakaryocytic lineages. Alters histone methylation by recruiting histone methyltransferase to target genes promoters. Plays a role in heterochromatin formation. In Xenopus laevis (African clawed frog), this protein is Zinc finger protein Gfi-1b (gfi1b).